Reading from the N-terminus, the 279-residue chain is Protein phosphatase 1 regulatory subunit 3E (279 aa).

Ser-16 and Ser-33 each carry phosphoserine. A disordered region spans residues Arg-28–Arg-87. Residues Ala-51–Arg-65 show a composition bias toward basic residues. Ser-66 is modified (phosphoserine). Residues Arg-87–Phe-90 carry the PP1-binding motif motif. In terms of domain architecture, CBM21 spans Ala-154–Leu-259. Residues Gly-176 to Trp-198 are glycogen-binding motif. Residues Trp-248–Tyr-256 form a substrate-binding motif region.

Acts as a glycogen-targeting subunit for PP1. PP1 is involved in glycogen metabolism and contributes to the activation of glycogen synthase leading to an increase in glycogen synthesis. The protein is Protein phosphatase 1 regulatory subunit 3E (Ppp1r3e) of Mus musculus (Mouse).